We begin with the raw amino-acid sequence, 403 residues long: Esterase LipC (403 aa).

Residues serine 237, aspartate 334, and histidine 367 contribute to the active site.

The protein belongs to the 'GDXG' lipolytic enzyme family.

Its subcellular location is the cell surface. It is found in the secreted. The protein resides in the cell wall. The protein localises to the capsule. It carries out the reaction a fatty acid ester + H2O = an aliphatic alcohol + a fatty acid + H(+). The enzyme catalyses a butanoate ester + H2O = an aliphatic alcohol + butanoate + H(+). It catalyses the reaction a hexanoate ester + H2O = an aliphatic alcohol + hexanoate + H(+). The catalysed reaction is an acetyl ester + H2O = an aliphatic alcohol + acetate + H(+). It carries out the reaction an octanoate ester + H2O = an aliphatic alcohol + octanoate + H(+). The enzyme catalyses decanoate ester + H2O = decanoate + an aliphatic alcohol + H(+). Esterase that can hydrolyze short-chain esters with the carbon chain containing 2 to 10 carbon atoms. Does not have lipase activity. Is highly immunogenic and elicits strong humoral immune responses in both HIV-negative (HIV-) and HIV-positive (HIV+) tuberculosis (TB) patients. Also elicits pro-inflammatory cytokine and chemokine responses from macrophages and pulmonary epithelial cells. May participate in the progression of active tuberculosis both by contributing to the utilization of lipid substrates for bacterial growth and replication, and by modulating immune responses. This chain is Esterase LipC, found in Mycobacterium tuberculosis (strain ATCC 25618 / H37Rv).